Reading from the N-terminus, the 349-residue chain is Rhodopsin (349 aa).

Residues 1–33 (TEGPYFYIPMSNATGIVRSPYEYPQYYLVYPAA) are Extracellular-facing. A glycan (N-linked (GlcNAc...) asparagine) is linked at asparagine 12. The helical transmembrane segment at 34–58 (YAVLGAYMFFLIIFGFPVNFLTLYV) threads the bilayer. Over 59–70 (TIEHKKLRTPLN) the chain is Cytoplasmic. Residues 71-93 (YILLNLAVADLFMVIGGFTTTIY) traverse the membrane as a helical segment. At 94–107 (TSMHGYFVLGRLGC) the chain is on the extracellular side. A disulfide bridge connects residues cysteine 107 and cysteine 184. The chain crosses the membrane as a helical span at residues 108–130 (NLEGFSATLGGMIGLWSLVVLAI). A 'Ionic lock' involved in activated form stabilization motif is present at residues 131–133 (ERW). The Cytoplasmic portion of the chain corresponds to 131–149 (ERWVVVCKPMSNFRFGENH). The helical transmembrane segment at 150 to 170 (AIMGVTLTWVMGLACTVPPLV) threads the bilayer. The Extracellular segment spans residues 171-199 (GWSRYIPEGMQCSCGIDYYTRAEGFNNDS). An N-linked (GlcNAc...) asparagine glycan is attached at asparagine 197. Residues 200–221 (YVLYMFVCHFLIPLVVIFFCYG) traverse the membrane as a helical segment. Over 222–249 (RLLCAVKEAAAAQQESETTQRAEREVTR) the chain is Cytoplasmic. Residues 250-271 (MVILMVIGFLVCWLPYASVAWY) traverse the membrane as a helical segment. At 272 to 283 (IFTHQGSEFGPL) the chain is on the extracellular side. Residues 284-305 (FMTIPAFFAKSSSIYNPVIYIC) form a helical membrane-spanning segment. Position 293 is an N6-(retinylidene)lysine (lysine 293). The Cytoplasmic portion of the chain corresponds to 306–349 (MNKQFRQCMLTTLFCGKNPFEEEEGASSTKTEASSASSSSVSPA). Cysteine 320 carries S-palmitoyl cysteine lipidation. A disordered region spans residues 326–349 (EEEEGASSTKTEASSASSSSVSPA). Positions 331–349 (ASSTKTEASSASSSSVSPA) are enriched in low complexity.

Belongs to the G-protein coupled receptor 1 family. Opsin subfamily. Post-translationally, phosphorylated on some or all of the serine and threonine residues present in the C-terminal region. Contains one covalently linked retinal chromophore.

Its subcellular location is the membrane. The protein localises to the cell projection. It localises to the cilium. The protein resides in the photoreceptor outer segment. Functionally, photoreceptor required for image-forming vision at low light intensity. While most salt water fish species use retinal as chromophore, most freshwater fish use 3-dehydroretinal, or a mixture of retinal and 3-dehydroretinal. Light-induced isomerization of 11-cis to all-trans retinal triggers a conformational change that activates signaling via G-proteins. Subsequent receptor phosphorylation mediates displacement of the bound G-protein alpha subunit by arrestin and terminates signaling. The sequence is that of Rhodopsin (rho) from Myripristis violacea (Lattice soldierfish).